Reading from the N-terminus, the 834-residue chain is Periplasmic nitrate reductase (834 aa).

The tat-type signal signal peptide spans 1–29; the sequence is MNLTRREFAKANAAAIAAAAAGLPILVRA. The region spanning 41 to 97 is the 4Fe-4S Mo/W bis-MGD-type domain; that stretch reads LVWNKAPCRFCGTGCSVMVATRDGQVVATHGDIKAEVNRGINCVKGYFLSKIMYGSD. [4Fe-4S] cluster contacts are provided by cysteine 48, cysteine 51, cysteine 55, and cysteine 83. Mo-bis(molybdopterin guanine dinucleotide) contacts are provided by residues lysine 85, glutamine 152, asparagine 177, cysteine 181, 214-221, 245-249, 264-266, methionine 375, glutamine 379, asparagine 485, 511-512, lysine 534, aspartate 561, and 721-730; these read WGSNMAEM, STFEH, QTD, SD, and TGRVLEHWHT. Phenylalanine 797 contributes to the substrate binding site. Asparagine 805 and lysine 822 together coordinate Mo-bis(molybdopterin guanine dinucleotide).

It belongs to the prokaryotic molybdopterin-containing oxidoreductase family. NasA/NapA/NarB subfamily. Component of the periplasmic nitrate reductase NapAB complex composed of NapA and NapB. [4Fe-4S] cluster is required as a cofactor. Mo-bis(molybdopterin guanine dinucleotide) serves as cofactor. Predicted to be exported by the Tat system. The position of the signal peptide cleavage has not been experimentally proven.

Its subcellular location is the periplasm. The enzyme catalyses 2 Fe(II)-[cytochrome] + nitrate + 2 H(+) = 2 Fe(III)-[cytochrome] + nitrite + H2O. In terms of biological role, catalytic subunit of the periplasmic nitrate reductase complex NapAB. Receives electrons from NapB and catalyzes the reduction of nitrate to nitrite. The sequence is that of Periplasmic nitrate reductase from Pseudomonas aeruginosa (strain LESB58).